The following is a 362-amino-acid chain: Aminomethyltransferase (362 aa).

The protein belongs to the GcvT family. As to quaternary structure, the glycine cleavage system is composed of four proteins: P, T, L and H.

The enzyme catalyses N(6)-[(R)-S(8)-aminomethyldihydrolipoyl]-L-lysyl-[protein] + (6S)-5,6,7,8-tetrahydrofolate = N(6)-[(R)-dihydrolipoyl]-L-lysyl-[protein] + (6R)-5,10-methylene-5,6,7,8-tetrahydrofolate + NH4(+). The glycine cleavage system catalyzes the degradation of glycine. The sequence is that of Aminomethyltransferase from Listeria monocytogenes serotype 4b (strain CLIP80459).